Here is a 161-residue protein sequence, read N- to C-terminus: Allophycocyanin beta chain (161 aa).

Asn-71 carries the N4-methylasparagine modification. Cys-81 is a binding site for (2R,3E)-phycocyanobilin.

The protein belongs to the phycobiliprotein family. As to quaternary structure, heterodimer of an alpha and a beta chain. In terms of processing, contains one covalently linked phycocyanobilin chromophore.

It localises to the cellular thylakoid membrane. In terms of biological role, light-harvesting photosynthetic bile pigment-protein from the phycobiliprotein complex. Allophycocyanin has a maximum absorption at approximately 650 nanometers. The polypeptide is Allophycocyanin beta chain (apcB) (Anabaena cylindrica).